The following is a 655-amino-acid chain: uncharacterized protein (655 aa).

In terms of domain architecture, PE-PPE spans 245–469 (PGVIAQALFT…NLKVIVNLGY (225 aa)).

Belongs to the mycobacterial PPE family.

This is an uncharacterized protein from Mycobacterium tuberculosis (strain ATCC 25618 / H37Rv).